Reading from the N-terminus, the 299-residue chain is N-acetylmuramic acid 6-phosphate etherase (299 aa).

Positions 54 to 217 (TIAQYKKGGR…STITMVGVGK (164 aa)) constitute an SIS domain. Residue Glu82 is the Proton donor of the active site. Glu113 is a catalytic residue.

This sequence belongs to the GCKR-like family. MurNAc-6-P etherase subfamily. As to quaternary structure, homodimer.

The catalysed reaction is N-acetyl-D-muramate 6-phosphate + H2O = N-acetyl-D-glucosamine 6-phosphate + (R)-lactate. It participates in amino-sugar metabolism; N-acetylmuramate degradation. In terms of biological role, specifically catalyzes the cleavage of the D-lactyl ether substituent of MurNAc 6-phosphate, producing GlcNAc 6-phosphate and D-lactate. The protein is N-acetylmuramic acid 6-phosphate etherase of Staphylococcus aureus (strain USA300).